Here is a 1276-residue protein sequence, read N- to C-terminus: Receptor-type guanylate cyclase gcy-28 (1276 aa).

The first 18 residues, 1–18 (MLRWLTLLSCILLTALHG), serve as a signal peptide directing secretion. Residues 19–515 (NIVEDVGAAQ…KSKCPGYPLH (497 aa)) lie on the Extracellular side of the membrane. N-linked (GlcNAc...) asparagine glycosylation is found at Asn87, Asn196, Asn338, Asn384, Asn387, Asn414, Asn428, and Asn444. A helical membrane pass occupies residues 516 to 536 (VYLLMGSFLLILVLVGLFIFF). Over 537-1276 (WRRYKLEQEL…EIPDFGEEFA (740 aa)) the chain is Cytoplasmic. Disordered regions lie at residues 562–601 (ESQK…NSDK) and 635–709 (IFTR…KKSL). A compositionally biased stretch (basic residues) spans 567 to 577 (NEKKKAKKRKN). Composition is skewed to polar residues over residues 590–599 (RSTSRSSVNS) and 642–660 (TPPS…SLQK). Positions 717–1013 (SFGMVSFKSG…SSVRKAVRSL (297 aa)) constitute a Protein kinase domain. ATP contacts are provided by residues 723 to 731 (FKSGSGGSV) and Lys756. A coiled-coil region spans residues 1017–1063 (NETSNLVDNLLKRMEQYANNLEGLVEERTQEYLAEKKKVEELLHQLL). The 130-residue stretch at 1086-1215 (TIYFSDIVGF…DTVNTSSRME (130 aa)) folds into the Guanylate cyclase domain. The Mg(2+) site is built by Asp1091, Ile1092, and Asp1135.

This sequence belongs to the adenylyl cyclase class-4/guanylyl cyclase family. Expressed in head neurons, ventral cord and tail neurons, body wall muscle, hypodermis, somatic gonad and intestine. Isoform d is expressed specifically in AIA interneurons.

Its subcellular location is the cell membrane. The protein localises to the cell projection. The protein resides in the dendrite. It is found in the axon. It localises to the perikaryon. The enzyme catalyses GTP = 3',5'-cyclic GMP + diphosphate. In terms of biological role, guanylate cyclase involved in the production of the second messenger cGMP. Regulates olfactory perception in AWC sensory neurons although may not be involved in the primary sensory transduction steps. Isoforms c: Regulates sensory integration of conflicting sensory cues in AIA interneurons. Functionally, regulates sensory integration of conflicting sensory cues in AIA interneurons. The sequence is that of Receptor-type guanylate cyclase gcy-28 from Caenorhabditis elegans.